Reading from the N-terminus, the 346-residue chain is Uroporphyrinogen decarboxylase (346 aa).

Substrate contacts are provided by residues 23-27 (RQAGR), aspartate 72, tyrosine 155, serine 209, and histidine 322.

This sequence belongs to the uroporphyrinogen decarboxylase family. As to quaternary structure, homodimer.

It is found in the cytoplasm. It carries out the reaction uroporphyrinogen III + 4 H(+) = coproporphyrinogen III + 4 CO2. Its pathway is porphyrin-containing compound metabolism; protoporphyrin-IX biosynthesis; coproporphyrinogen-III from 5-aminolevulinate: step 4/4. In terms of biological role, catalyzes the decarboxylation of four acetate groups of uroporphyrinogen-III to yield coproporphyrinogen-III. This chain is Uroporphyrinogen decarboxylase, found in Anaeromyxobacter dehalogenans (strain 2CP-C).